The chain runs to 450 residues: Hyaluronidase-1 (450 aa).

An N-terminal signal peptide occupies residues 1–35 (MRPFSLEVSLHLPWAMAAHLLPVCTLFLNLLSMTQ). Intrachain disulfides connect C58–C348 and C222–C236. N-linked (GlcNAc...) asparagine glycosylation is present at N85. Catalysis depends on E146, which acts as the Proton donor. Residues N231 and N365 are each glycosylated (N-linked (GlcNAc...) asparagine). Intrachain disulfides connect C373–C384, C378–C433, and C435–C444. Residue N398 is glycosylated (N-linked (GlcNAc...) asparagine). The region spanning 433–444 (CRCYRGWRGTRC) is the EGF-like domain.

It belongs to the glycosyl hydrolase 56 family.

The protein localises to the secreted. The protein resides in the lysosome. The enzyme catalyses Random hydrolysis of (1-&gt;4)-linkages between N-acetyl-beta-D-glucosamine and D-glucuronate residues in hyaluronate.. In terms of biological role, may have a role in promoting tumor progression. May block the TGFB1-enhanced cell growth. The protein is Hyaluronidase-1 (HYAL1) of Bos taurus (Bovine).